The following is a 110-amino-acid chain: Acylphosphatase (110 aa).

The 87-residue stretch at Arg24 to Arg110 folds into the Acylphosphatase-like domain. Active-site residues include Arg39 and Asn57.

Belongs to the acylphosphatase family.

It carries out the reaction an acyl phosphate + H2O = a carboxylate + phosphate + H(+). The sequence is that of Acylphosphatase (acyP) from Rubrobacter xylanophilus (strain DSM 9941 / JCM 11954 / NBRC 16129 / PRD-1).